The chain runs to 275 residues: Large ribosomal subunit protein uL2 (275 aa).

The disordered stretch occupies residues 220-275; sequence QTRGAAMNPVDHPHGGGEGKTGSSGHPVSPWGMPAKGFKTRKKKASDKLIISRRKK. Residues 257-275 show a composition bias toward basic residues; sequence FKTRKKKASDKLIISRRKK.

The protein belongs to the universal ribosomal protein uL2 family. Part of the 50S ribosomal subunit. Forms a bridge to the 30S subunit in the 70S ribosome.

One of the primary rRNA binding proteins. Required for association of the 30S and 50S subunits to form the 70S ribosome, for tRNA binding and peptide bond formation. It has been suggested to have peptidyltransferase activity; this is somewhat controversial. Makes several contacts with the 16S rRNA in the 70S ribosome. This Wolinella succinogenes (strain ATCC 29543 / DSM 1740 / CCUG 13145 / JCM 31913 / LMG 7466 / NCTC 11488 / FDC 602W) (Vibrio succinogenes) protein is Large ribosomal subunit protein uL2.